The following is a 429-amino-acid chain: tRNA(Ile2) 2-agmatinylcytidine synthetase TiaS (429 aa).

Residues 403-429 (KPPERPLHPSKSLEPPSTPIHSDTISL) are disordered.

Belongs to the TiaS family.

The protein localises to the cytoplasm. It carries out the reaction cytidine(34) in tRNA(Ile2) + agmatine + ATP + H2O = 2-agmatinylcytidine(34) in tRNA(Ile2) + AMP + 2 phosphate + 2 H(+). Its function is as follows. ATP-dependent agmatine transferase that catalyzes the formation of 2-agmatinylcytidine (agm2C) at the wobble position (C34) of tRNA(Ile2), converting the codon specificity from AUG to AUA. The chain is tRNA(Ile2) 2-agmatinylcytidine synthetase TiaS from Hyperthermus butylicus (strain DSM 5456 / JCM 9403 / PLM1-5).